We begin with the raw amino-acid sequence, 392 residues long: MSGPVPSRARVYTDVNTHRPRDYWDYESHVVEWGNQDDYQLVRKLGRGKYSEVFEAINITNNEKVVVKILKPVKKKKIKREIKILENLRGGPNIITLADIVKDPVSRTPALVFEHVNNTDFKQLYQTLTDYDIRFYMYEILKALDYCHSMGIMHRDVKPHNVMIDHEHRKLRLIDWGLAEFYHPGQEYNVRVASRYFKGPELLVDYQMYDYSLDMWSLGCMLASMIFRKEPFFHGHDNYDQLVRIAKVLGTEDLYDYIDKYNIELDPRFNDILGRHSRKRWERFVHSENQHLVSPEALDFLDKLLRYDHQTRLTAREAMDHPYFYPIVKDQSRMGGSNMPSGSSTPVSSASMMSGISTVPTPSALGSLAGSPVISATNTLGTPVAAAAGATQ.

The 286-residue stretch at Tyr39–Phe324 folds into the Protein kinase domain. ATP is bound by residues Leu45–Val53 and Lys68. The active-site Proton acceptor is the Asp156. The segment at Met334–Gly355 is disordered. A compositionally biased stretch (low complexity) spans Ser337 to Ser354.

The protein belongs to the protein kinase superfamily. Ser/Thr protein kinase family. CK2 subfamily. Tetramer composed of an alpha chain, an alpha' and two beta chains.

Its subcellular location is the nucleus. It carries out the reaction L-seryl-[protein] + ATP = O-phospho-L-seryl-[protein] + ADP + H(+). The catalysed reaction is L-threonyl-[protein] + ATP = O-phospho-L-threonyl-[protein] + ADP + H(+). In terms of biological role, catalytic subunit of a constitutively active serine/threonine-protein kinase complex that phosphorylates a large number of substrates containing acidic residues C-terminal to the phosphorylated serine or threonine. Regulates numerous cellular processes, such as cell cycle progression, apoptosis and transcription, as well as viral infection. May act as a regulatory node which integrates and coordinates numerous signals leading to an appropriate cellular response. During mitosis, functions as a component of the p53/TP53-dependent spindle assembly checkpoint (SAC) that maintains cyclin-B-CDK1 activity and G2 arrest in response to spindle damage. Can also negatively regulate apoptosis. Phosphorylates the caspases CASP9 and CASP2 and the apoptotic regulator NOL3. Phosphorylation protects CASP9 from cleavage and activation by CASP8, and inhibits the dimerization of CASP2 and activation of CASP8. Plays an important role in the circadian clock function by phosphorylating BMAL1. In Xenopus laevis (African clawed frog), this protein is Casein kinase II subunit alpha (csnk2a1).